The following is a 322-amino-acid chain: HPr kinase/phosphorylase (322 aa).

Catalysis depends on residues H146 and K167. 161–168 provides a ligand contact to ATP; the sequence is GDSGLGKS. S168 is a binding site for Mg(2+). D185 serves as the catalytic Proton acceptor; for phosphorylation activity. Proton donor; for dephosphorylation activity. The tract at residues 209–218 is important for the catalytic mechanism of both phosphorylation and dephosphorylation; the sequence is LEVRGLGLLD. E210 is a Mg(2+) binding site. R250 is an active-site residue. The interval 271–276 is important for the catalytic mechanism of dephosphorylation; that stretch reads QVAAGR.

The protein belongs to the HPrK/P family. In terms of assembly, homohexamer. It depends on Mg(2+) as a cofactor.

It carries out the reaction [HPr protein]-L-serine + ATP = [HPr protein]-O-phospho-L-serine + ADP + H(+). The catalysed reaction is [HPr protein]-O-phospho-L-serine + phosphate + H(+) = [HPr protein]-L-serine + diphosphate. In terms of biological role, catalyzes the ATP- as well as the pyrophosphate-dependent phosphorylation of a specific serine residue in HPr, a phosphocarrier protein of the phosphoenolpyruvate-dependent sugar phosphotransferase system (PTS). HprK/P also catalyzes the pyrophosphate-producing, inorganic phosphate-dependent dephosphorylation (phosphorolysis) of seryl-phosphorylated HPr (P-Ser-HPr). This chain is HPr kinase/phosphorylase, found in Burkholderia multivorans (strain ATCC 17616 / 249).